A 341-amino-acid chain; its full sequence is Pre-mRNA-processing protein 45 (341 aa).

Disordered stretches follow at residues 1–31, 181–226, and 302–341; these read MFSS…HEKS, NYQE…EDQA, and EQHE…KTKY. The span at 192 to 201 shows a compositional bias: basic residues; the sequence is FKLRKNRHKN. The span at 302–318 shows a compositional bias: basic and acidic residues; it reads EQHEKENKLKELADIAR.

The protein belongs to the SNW family. As to quaternary structure, associated with the spliceosome.

It is found in the nucleus. Its function is as follows. Involved in pre-mRNA splicing. This is Pre-mRNA-processing protein 45 (PRP45) from Debaryomyces hansenii (strain ATCC 36239 / CBS 767 / BCRC 21394 / JCM 1990 / NBRC 0083 / IGC 2968) (Yeast).